A 322-amino-acid polypeptide reads, in one-letter code: MLASVRVNQLQRLLLSARRLSSSPIIPPSRLLHQRLFSTSDTDASAASFSSSHPKIQTLEGKASNKSRSTSSTTSLNEDELAKFSAIADTWWHSEGPFKPLHQMNPTRLAFIRSTLCRHFSKDPSSAKPFEGLKFIDIGCGGGLLSEPLARMGATVTGVDAVDKNVKIARLHADMDPVTSTIEYLCTTAEKLADEGRKFDAVLSLEVIEHVANPAEFCKSLSALTIPNGATVLSTINRTMRAYASTIVGAEYILRWLPKGTHQWSSFVTPEEMSMILQRASVDVKEIAGFVYNPITGRWLLSDDISVNYIAYGTKRKDLGDI.

Residues 1–37 constitute a mitochondrion transit peptide; sequence MLASVRVNQLQRLLLSARRLSSSPIIPPSRLLHQRLF. The tract at residues 46–75 is disordered; it reads AASFSSSHPKIQTLEGKASNKSRSTSSTTS. Arginine 108, glycine 139, aspartate 160, and leucine 205 together coordinate S-adenosyl-L-methionine. 3 residues coordinate Mg(2+): glutamate 206, glutamate 209, and histidine 210.

Belongs to the class I-like SAM-binding methyltransferase superfamily. UbiG/COQ3 family. In terms of assembly, component of a multi-subunit COQ enzyme complex. Mg(2+) is required as a cofactor.

It localises to the mitochondrion inner membrane. The enzyme catalyses a 3,4-dihydroxy-5-(all-trans-polyprenyl)benzoate + S-adenosyl-L-methionine = a 4-hydroxy-3-methoxy-5-(all-trans-polyprenyl)benzoate + S-adenosyl-L-homocysteine + H(+). It carries out the reaction a 3-demethylubiquinone + S-adenosyl-L-methionine = a ubiquinone + S-adenosyl-L-homocysteine. It catalyses the reaction a 3-demethylubiquinol + S-adenosyl-L-methionine = a ubiquinol + S-adenosyl-L-homocysteine + H(+). Its pathway is cofactor biosynthesis; ubiquinone biosynthesis. Its function is as follows. O-methyltransferase required for two non-consecutive steps during ubiquinone biosynthesis. Catalyzes the 2 O-methylation of 3,4-dihydroxy-5-(all-trans-polyprenyl)benzoic acid into 4-hydroxy-3-methoxy-5-(all-trans-polyprenyl)benzoic acid. Also catalyzes the last step of ubiquinone biosynthesis by mediating methylation of 3-demethylubiquinone into ubiquinone. Also able to mediate the methylation of 3-demethylubiquinol into ubiquinol. The polypeptide is Ubiquinone biosynthesis O-methyltransferase, mitochondrial (Arabidopsis thaliana (Mouse-ear cress)).